We begin with the raw amino-acid sequence, 54 residues long: 2-aminomuconate deaminase (54 aa).

In terms of assembly, homohexamer.

The enzyme catalyses (2Z,4E)-2-aminomuconate + H2O = (3E)-2-oxohex-3-enedioate + NH4(+). The protein operates within xenobiotic degradation; nitrobenzene degradation. Functionally, converts 2-aminomuconate to 4-oxalocrotonate, an intermediate step in the biodegradation of nitrobenzene. This Ectopseudomonas oleovorans (Pseudomonas oleovorans) protein is 2-aminomuconate deaminase.